Here is a 356-residue protein sequence, read N- to C-terminus: Histidinol-phosphate aminotransferase (356 aa).

At lysine 214 the chain carries N6-(pyridoxal phosphate)lysine.

This sequence belongs to the class-II pyridoxal-phosphate-dependent aminotransferase family. Histidinol-phosphate aminotransferase subfamily. Homodimer. It depends on pyridoxal 5'-phosphate as a cofactor.

The catalysed reaction is L-histidinol phosphate + 2-oxoglutarate = 3-(imidazol-4-yl)-2-oxopropyl phosphate + L-glutamate. It participates in amino-acid biosynthesis; L-histidine biosynthesis; L-histidine from 5-phospho-alpha-D-ribose 1-diphosphate: step 7/9. This is Histidinol-phosphate aminotransferase from Escherichia fergusonii (strain ATCC 35469 / DSM 13698 / CCUG 18766 / IAM 14443 / JCM 21226 / LMG 7866 / NBRC 102419 / NCTC 12128 / CDC 0568-73).